The sequence spans 100 residues: uncharacterized protein (100 aa).

The segment at 1-86 is disordered; it reads MRGTRRGPSG…RHRPPEVTEP (86 aa). Pro residues predominate over residues 35 to 48; that stretch reads DTPPPRAPPPPPPL.

This is an uncharacterized protein from Human herpesvirus 6A (strain Uganda-1102) (HHV-6 variant A).